The primary structure comprises 417 residues: Phosphoglycerate kinase, cytosolic (417 aa).

Valine 23, aspartate 24, phenylalanine 25, asparagine 26, arginine 39, serine 61, histidine 62, glycine 64, arginine 65, arginine 132, histidine 168, and arginine 169 together coordinate (2R)-3-phosphoglycerate. 2 residues coordinate ADP: glycine 214 and alanine 215. CDP is bound at residue glycine 214. Residues alanine 215 and lysine 216 each coordinate AMP. An ATP-binding site is contributed by alanine 215. Alanine 215 provides a ligand contact to Mg(2+). Lysine 216 is a binding site for (2R)-3-phosphoglycerate. CDP is bound at residue aspartate 219. Aspartate 219 lines the Mg(2+) pocket. Residues lysine 220 and glycine 238 each coordinate ADP. Lysine 220 contacts AMP. Lysine 220 contacts ATP. Glycine 238 contributes to the CDP binding site. 2 residues coordinate AMP: alanine 239 and alanine 311. Residues alanine 239 and alanine 311 each contribute to the ATP site. 2 residues coordinate ADP: alanine 311 and asparagine 335. Glycine 336 and phenylalanine 341 together coordinate CDP. ADP-binding residues include phenylalanine 341, glutamate 342, aspartate 374, and serine 375. An AMP-binding site is contributed by glutamate 342. Positions 342, 374, and 375 each coordinate ATP. A Mg(2+)-binding site is contributed by aspartate 374.

The protein belongs to the phosphoglycerate kinase family. In terms of assembly, monomer. It depends on Mg(2+) as a cofactor.

It is found in the cytoplasm. The catalysed reaction is (2R)-3-phosphoglycerate + ATP = (2R)-3-phospho-glyceroyl phosphate + ADP. Its pathway is carbohydrate degradation; glycolysis; pyruvate from D-glyceraldehyde 3-phosphate: step 2/5. In Leishmania major, this protein is Phosphoglycerate kinase, cytosolic (PGKB).